Here is a 223-residue protein sequence, read N- to C-terminus: Ribonuclease 3 (223 aa).

Positions 3–125 (LERLQKKLSY…IIAAIYLDAG (123 aa)) constitute an RNase III domain. E38 provides a ligand contact to Mg(2+). Residue D42 is part of the active site. Mg(2+)-binding residues include D111 and E114. Residue E114 is part of the active site. The region spanning 152-222 (DPKTRLQEFL…AEQVLAKLTT (71 aa)) is the DRBM domain.

The protein belongs to the ribonuclease III family. In terms of assembly, homodimer. It depends on Mg(2+) as a cofactor.

The protein resides in the cytoplasm. The enzyme catalyses Endonucleolytic cleavage to 5'-phosphomonoester.. Its function is as follows. Digests double-stranded RNA. Involved in the processing of primary rRNA transcript to yield the immediate precursors to the large and small rRNAs (23S and 16S). Processes some mRNAs, and tRNAs when they are encoded in the rRNA operon. Processes pre-crRNA and tracrRNA of type II CRISPR loci if present in the organism. The protein is Ribonuclease 3 of Actinobacillus pleuropneumoniae serotype 5b (strain L20).